The following is a 297-amino-acid chain: Acetaldehyde dehydrogenase (297 aa).

15–18 (SGSI) provides a ligand contact to NAD(+). Cys130 functions as the Acyl-thioester intermediate in the catalytic mechanism. Residues 162–170 (SAGIATREN) and Asn272 each bind NAD(+).

The protein belongs to the acetaldehyde dehydrogenase family.

It catalyses the reaction acetaldehyde + NAD(+) + CoA = acetyl-CoA + NADH + H(+). The protein is Acetaldehyde dehydrogenase (mhpF) of Burkholderia pseudomallei (strain K96243).